Reading from the N-terminus, the 117-residue chain is Large ribosomal subunit protein bL20 (117 aa).

It belongs to the bacterial ribosomal protein bL20 family.

Its function is as follows. Binds directly to 23S ribosomal RNA and is necessary for the in vitro assembly process of the 50S ribosomal subunit. It is not involved in the protein synthesizing functions of that subunit. The protein is Large ribosomal subunit protein bL20 of Mesomycoplasma hyopneumoniae (strain J / ATCC 25934 / NCTC 10110) (Mycoplasma hyopneumoniae).